The sequence spans 252 residues: MEKTLWTWTLLAVFSLLVVKGMSDGLDLADALGDDDDDEPTTKPPKADPGAGGAGGAAVKPTLKPVKPTVKEPAKPKPKQTGLDDFDLADALNPDNDIKGKGKDSGKGDKEVGGGSRDDGTPNSRGSQFSDDDLLDVGNDNSYKPDKGKGGKGGSSSNVGDLDPADDNNYDTMAETGTIAGIVSAVAMALVGAVSSYISYQKKKLCFSIQQSLNADMVKADAPDAVVAQEPQVQQTLLQPPNAEPPTEENAV.

Residues 1-23 (MEKTLWTWTLLAVFSLLVVKGMS) form the signal peptide. The disordered stretch occupies residues 30 to 170 (DALGDDDDDE…DLDPADDNNY (141 aa)). Over residues 57-68 (AAVKPTLKPVKP) the composition is skewed to low complexity. Basic and acidic residues predominate over residues 96–120 (NDIKGKGKDSGKGDKEVGGGSRDDG). A helical transmembrane segment spans residues 178–198 (TIAGIVSAVAMALVGAVSSYI).

The protein belongs to the CD99 family.

The protein resides in the cell membrane. It is found in the cell junction. In terms of biological role, may function as a homophilic adhesion molecule. In Danio rerio (Zebrafish), this protein is CD99 antigen-like protein 2 (cd99l2).